Here is a 141-residue protein sequence, read N- to C-terminus: Hemoglobin subunit alpha-D (141 aa).

In terms of domain architecture, Globin spans 1–141 (MLTADDKKLI…VAAVLAEKYR (141 aa)). Heme b is bound by residues histidine 58 and histidine 87.

It belongs to the globin family. Heterotetramer of two alpha-D chains and two beta chains. Red blood cells.

Involved in oxygen transport from the lung to the various peripheral tissues. The sequence is that of Hemoglobin subunit alpha-D (HBAD) from Struthio camelus (Common ostrich).